An 808-amino-acid chain; its full sequence is Disks large-associated protein 5 (808 aa).

Phosphoserine occurs at positions 66 and 70. Residues 88-119 are a coiled coil; it reads QRKQLLQKYKEEKQLQKLKEQREKAKRGVFKV. The segment at 134-282 is disordered; it reads QRGAKAEPEK…QTRETSEMGP (149 aa). Composition is skewed to basic and acidic residues over residues 135 to 145 and 180 to 193; these read RGAKAEPEKAF and QTSE…ERKV. A Phosphoserine modification is found at Ser-201. Basic and acidic residues-rich tracts occupy residues 232 to 241 and 249 to 278; these read TNEKGSERMR and KKPE…RETS. Position 328 is a phosphoserine (Ser-328). Residues Thr-337 and Thr-386 each carry the phosphothreonine modification. The tract at residues 377–413 is disordered; that stretch reads HVLNQKGASTSDSNHASVKGVPCSEGSEGQTSQPPHD. A compositionally biased stretch (polar residues) spans 382–392; the sequence is KGASTSDSNHA. A Phosphoserine modification is found at Ser-598. Phosphoserine; by AURKA is present on Ser-607. Phosphoserine is present on Ser-612. Thr-617 is subject to Phosphothreonine. Ser-620 bears the Phosphoserine mark. Positions 629–654 are disordered; sequence RAAGDLLRQKMPLKKPDPQSSKSEHV. Basic and acidic residues predominate over residues 642–654; sequence KKPDPQSSKSEHV. Residue Thr-728 is modified to Phosphothreonine. A disordered region spans residues 735 to 757; that stretch reads SNPETNTSSQSNTSQEEAEASQS. Ser-743 is modified (phosphoserine). The residue at position 797 (Ser-797) is a Phosphoserine; by AURKA. Position 806 is a phosphoserine (Ser-806).

This sequence belongs to the SAPAP family. As to quaternary structure, interacts with CDC2. Interacts with the C-terminal proline-rich region of FBXO7. Recruited by FBXO7 to a SCF (SKP1-CUL1-F-box) protein complex in a CDC2/Cyclin B-phosphorylation dependent manner. Interacts with CDH1. In terms of processing, ubiquitinated, leading to its degradation. Post-translationally, decreased phosphorylation levels are associated with the differentiation of intestinal epithelial cells. As to expression, expressed at low levels in normal resting liver. Up-regulated in regenerating liver after partial hepatectomy.

It is found in the nucleus. The protein localises to the cytoplasm. Its subcellular location is the cytoskeleton. It localises to the spindle. Potential cell cycle regulator that may play a role in carcinogenesis of cancer cells. Mitotic phosphoprotein regulated by the ubiquitin-proteasome pathway. Key regulator of adherens junction integrity and differentiation that may be involved in CDH1-mediated adhesion and signaling in epithelial cells. The chain is Disks large-associated protein 5 (Dlgap5) from Mus musculus (Mouse).